A 266-amino-acid polypeptide reads, in one-letter code: Indole-3-glycerol phosphate synthase (266 aa).

This sequence belongs to the TrpC family.

It catalyses the reaction 1-(2-carboxyphenylamino)-1-deoxy-D-ribulose 5-phosphate + H(+) = (1S,2R)-1-C-(indol-3-yl)glycerol 3-phosphate + CO2 + H2O. It participates in amino-acid biosynthesis; L-tryptophan biosynthesis; L-tryptophan from chorismate: step 4/5. The protein is Indole-3-glycerol phosphate synthase of Paracidovorax citrulli (strain AAC00-1) (Acidovorax citrulli).